We begin with the raw amino-acid sequence, 355 residues long: Proto-oncogene Wnt-3 (355 aa).

A signal peptide spans 1–21 (MEPHLLGLLLGLLLGGTRVLA). 11 disulfide bridges follow: Cys-80-Cys-91, Cys-131-Cys-139, Cys-141-Cys-158, Cys-206-Cys-220, Cys-208-Cys-215, Cys-284-Cys-315, Cys-300-Cys-310, Cys-314-Cys-354, Cys-330-Cys-345, Cys-332-Cys-342, and Cys-337-Cys-338. Asn-90 carries N-linked (GlcNAc...) asparagine glycosylation. Ser-212 is lipidated: O-palmitoleoyl serine; by PORCN. Asn-301 carries an N-linked (GlcNAc...) asparagine glycan.

Belongs to the Wnt family. In terms of assembly, forms a soluble 1:1 complex with AFM; this prevents oligomerization and is required for prolonged biological activity. The complex with AFM may represent the physiological form in body fluids. Interacts with PORCN. Interacts with WLS. In terms of processing, palmitoleoylation is required for efficient binding to frizzled receptors. Depalmitoleoylation leads to Wnt signaling pathway inhibition.

The protein resides in the secreted. Its subcellular location is the extracellular space. The protein localises to the extracellular matrix. Its function is as follows. Ligand for members of the frizzled family of seven transmembrane receptors. Functions in the canonical Wnt signaling pathway that results in activation of transcription factors of the TCF/LEF family. Required for normal gastrulation, formation of the primitive streak, and for the formation of the mesoderm during early embryogenesis. Required for normal formation of the apical ectodermal ridge. Required for normal embryonic development, and especially for limb development. This Homo sapiens (Human) protein is Proto-oncogene Wnt-3 (WNT3).